A 185-amino-acid chain; its full sequence is UPF0397 protein lhv_0999 (185 aa).

5 helical membrane-spanning segments follow: residues 11–31, 45–65, 72–92, 111–131, and 145–165; these read VVAM…TSIP, FLAL…GFIG, IMYG…GLII, ILLF…VVAP, and VFVQ…VVGT.

The protein belongs to the UPF0397 family.

The protein resides in the cell membrane. The chain is UPF0397 protein lhv_0999 from Lactobacillus helveticus (strain DPC 4571).